Consider the following 147-residue polypeptide: Small ribosomal subunit protein uS5 (147 aa).

The region spanning 9–72 is the S5 DRBM domain; the sequence is FQEVVVNIGR…DDAFKNLIHV (64 aa).

The protein belongs to the universal ribosomal protein uS5 family. Part of the 30S ribosomal subunit. Contacts proteins S4 and S8.

With S4 and S12 plays an important role in translational accuracy. Functionally, located at the back of the 30S subunit body where it stabilizes the conformation of the head with respect to the body. The polypeptide is Small ribosomal subunit protein uS5 (Helicobacter pylori (strain J99 / ATCC 700824) (Campylobacter pylori J99)).